A 258-amino-acid polypeptide reads, in one-letter code: Thrombin-like enzyme ancrod-2 (258 aa).

An N-terminal signal peptide occupies residues 1–18 (MVLIRVLANLVILQLSYA). The propeptide occupies 19–24 (QKSSEL). Positions 25–251 (VIGGDECNIN…HLHWILSIMA (227 aa)) constitute a Peptidase S1 domain. 6 cysteine pairs are disulfide-bonded: Cys31/Cys165, Cys52/Cys68, Cys102/Cys256, Cys144/Cys212, Cys176/Cys191, and Cys202/Cys227. Active-site charge relay system residues include His67 and Asp112. N-linked (GlcNAc...) asparagine glycosylation is found at Asn123 and Asn172. The active-site Charge relay system is the Ser206. Asn253 carries N-linked (GlcNAc...) asparagine glycosylation.

Belongs to the peptidase S1 family. Snake venom subfamily. As to quaternary structure, monomer. In terms of tissue distribution, expressed by the venom gland.

Its subcellular location is the secreted. It carries out the reaction Selective cleavage of Arg-|-Xaa bond in fibrinogen, to form fibrin, and release fibrinopeptide A. The specificity of further degradation of fibrinogen varies with species origin of the enzyme.. Functionally, thrombin-like snake venom serine protease. Cleaves fibrinogen (FGA) to split of fibrinopeptides AM, AO, and AY; the aberrant fibrinogen is then incapable of being cross-linked, forming easily dispersible clots. The polypeptide is Thrombin-like enzyme ancrod-2 (Calloselasma rhodostoma (Malayan pit viper)).